We begin with the raw amino-acid sequence, 198 residues long: NAD(P)H dehydrogenase (quinone) (198 aa).

In terms of domain architecture, Flavodoxin-like spans Ile4 to Val189. Residues Ser10–Ile15 and Thr78–Phe80 contribute to the FMN site. An NAD(+)-binding site is contributed by Tyr12. Trp98 is a substrate binding site. Residues Ser113 to Gly118 and His133 each bind FMN.

This sequence belongs to the WrbA family. Requires FMN as cofactor.

It catalyses the reaction a quinone + NADH + H(+) = a quinol + NAD(+). The catalysed reaction is a quinone + NADPH + H(+) = a quinol + NADP(+). The polypeptide is NAD(P)H dehydrogenase (quinone) (Klebsiella pneumoniae (strain 342)).